Reading from the N-terminus, the 159-residue chain is Probable deoxyuridine 5'-triphosphate nucleotidohydrolase (159 aa).

The protein belongs to the dCTP deaminase family. Archaeal dUTPase subfamily.

The enzyme catalyses dUTP + H2O = dUMP + diphosphate + H(+). The protein operates within pyrimidine metabolism; dUMP biosynthesis; dUMP from dCTP (dUTP route): step 2/2. In terms of biological role, this enzyme is involved in nucleotide metabolism: it produces dUMP, the immediate precursor of thymidine nucleotides and it decreases the intracellular concentration of dUTP so that uracil cannot be incorporated into DNA. This chain is Probable deoxyuridine 5'-triphosphate nucleotidohydrolase, found in Aeropyrum pernix (strain ATCC 700893 / DSM 11879 / JCM 9820 / NBRC 100138 / K1).